A 1875-amino-acid polypeptide reads, in one-letter code: Neuron navigator 1 (1875 aa).

Methionine 1 carries the post-translational modification N-acetylmethionine. The disordered stretch occupies residues 1 to 63 (MLGSSVKSVQ…GGSGSMAKAS (63 aa)). 2 positions are modified to phosphoserine: serine 93 and serine 145. Disordered regions lie at residues 115–230 (SDDM…EERA) and 280–339 (SSLR…VGGS). The residue at position 162 (threonine 162) is a Phosphothreonine. Serine 197 and serine 202 each carry phosphoserine. The stretch at 258–283 (ESQRKRTVQNVLDLRQNLEETMSSLR) forms a coiled coil. A compositionally biased stretch (polar residues) spans 280 to 291 (SSLRGSQVTHSS). Phosphoserine occurs at positions 299, 311, 315, 365, and 394. Residues 304–318 (PRSVSSLSNRSSPLS) are compositionally biased toward low complexity. Disordered regions lie at residues 391–463 (GYMS…RTDS) and 477–783 (SESE…AELP). 2 stretches are compositionally biased toward low complexity: residues 414–428 (DESS…DASD) and 436–456 (NASS…RSST). Phosphoserine occurs at positions 455, 477, 479, and 493. The span at 479-489 (SEEKTPKKLEY) shows a compositional bias: basic and acidic residues. Positions 506–522 (ERPESCDDASKGGELKK) are enriched in basic and acidic residues. Serine 531 is subject to Phosphoserine. Residue threonine 537 is modified to Phosphothreonine. Position 544 is a phosphoserine (serine 544). A Phosphothreonine modification is found at threonine 547. The span at 558 to 569 (GKPEGKATDKGK) shows a compositional bias: basic and acidic residues. Phosphothreonine is present on threonine 575. Residues 584–594 (AGRDRLSDAKK) are compositionally biased toward basic and acidic residues. 2 stretches are compositionally biased toward polar residues: residues 618-638 (GTAT…QKSS) and 648-658 (RKTSLDVSNSV). Serine 651 is modified (phosphoserine). An Omega-N-methylarginine modification is found at arginine 690. Polar residues-rich tracts occupy residues 696–712 (VSSS…QGGL) and 726–735 (GRSTPAPVNQ). Residues 733–758 (VNQTDREKEKAKAKAVALDSDNISLK) are a coiled coil. A phosphoserine mark is found at serine 752, serine 756, serine 762, serine 799, and serine 810. Residues 753-772 (DNISLKSIGSPESTPKNQAS) are compositionally biased toward polar residues. Disordered stretches follow at residues 800 to 840 (LANL…PLPS) and 893 to 982 (MSLP…SPPA). 2 stretches are compositionally biased toward low complexity: residues 807 to 818 (NSNSLDLPSSSD) and 893 to 902 (MSLPSAFPSS). Serine 998 is subject to Phosphoserine. Threonine 1004 bears the Phosphothreonine mark. Positions 1070-1161 (SSAEERMQSE…SEAQAVIQGA (92 aa)) form a coiled coil. The residue at position 1168 (threonine 1168) is a Phosphothreonine. Disordered stretches follow at residues 1172-1202 (LRIK…KDAD), 1242-1306 (ATPD…KEVS), 1359-1381 (VAPG…LSSP), and 1808-1841 (KLYH…SLDS). Phosphoserine is present on serine 1179. The segment covering 1179 to 1198 (SSDSISSLNSITSHSSIGSS) has biased composition (low complexity). Positions 1244-1259 (PDSSAPSSPKLQHGST) are enriched in polar residues. Positions 1260–1281 (ETASPSIKSSTSSSVGTEVTET) are enriched in low complexity. At serine 1263 the chain carries Phosphoserine. Residues 1301-1360 (EKKEVSELRSELWEKEMKLTDIRLEALNSAHQLDQLRETMHNMQLEVDLLKAENDRLKVA) adopt a coiled-coil conformation. Residues 1365-1381 (SGCTPGQVPGSSALSSP) show a composition bias toward polar residues. Serine 1380 is modified (phosphoserine).

This sequence belongs to the Nav/unc-53 family. In terms of assembly, interacts with tubulin. In terms of tissue distribution, expressed in heart and brain. Present in brain (at protein level). In adult brain, found almost exclusively in areas of secondary neurogenesis from the hippocampus and the subventricular zone.

The protein localises to the cytoplasm. Its subcellular location is the cytoskeleton. Functionally, may be involved in neuronal migration. This Mus musculus (Mouse) protein is Neuron navigator 1 (Nav1).